The chain runs to 296 residues: NmrA-like family domain-containing protein 1 (296 aa).

NADP(+) contacts are provided by residues 11–16 (GATGAQ), 37–41 (RSPGR), 58–59 (DQ), 79–81 (TNF), K133, and 155–158 (YYEN).

It belongs to the NmrA-type oxidoreductase family. As to quaternary structure, homodimer.

The protein localises to the cytoplasm. The protein resides in the perinuclear region. It is found in the nucleus. Redox sensor protein. Undergoes restructuring and subcellular redistribution in response to changes in intracellular NADPH/NADP(+) levels. In Gallus gallus (Chicken), this protein is NmrA-like family domain-containing protein 1 (NMRAL1).